Here is a 324-residue protein sequence, read N- to C-terminus: Acetyl-coenzyme A carboxylase carboxyl transferase subunit beta (324 aa).

The segment covering 1 to 16 has biased composition (low complexity); it reads MTKNNNDLSNSSSNPP. A disordered region spans residues 1–51; it reads MTKNNNDLSNSSSNPPSNRPVAGKEAELEIQRETHAAQSGQSESWLSRPIP. Residues 22–35 show a composition bias toward basic and acidic residues; sequence AGKEAELEIQRETH. A compositionally biased stretch (polar residues) spans 36 to 45; it reads AAQSGQSESW. The 257-residue stretch at 68–324 folds into the CoA carboxyltransferase N-terminal domain; the sequence is PSTECPQCHS…YRLLAKLTHV (257 aa). 4 residues coordinate Zn(2+): cysteine 72, cysteine 75, cysteine 91, and cysteine 94. The segment at 72-94 adopts a C4-type zinc-finger fold; sequence CPQCHSMITNTALIFNAYVCPHC.

It belongs to the AccD/PCCB family. Acetyl-CoA carboxylase is a heterohexamer composed of biotin carboxyl carrier protein (AccB), biotin carboxylase (AccC) and two subunits each of ACCase subunit alpha (AccA) and ACCase subunit beta (AccD). The cofactor is Zn(2+).

It is found in the cytoplasm. It carries out the reaction N(6)-carboxybiotinyl-L-lysyl-[protein] + acetyl-CoA = N(6)-biotinyl-L-lysyl-[protein] + malonyl-CoA. Its pathway is lipid metabolism; malonyl-CoA biosynthesis; malonyl-CoA from acetyl-CoA: step 1/1. Its function is as follows. Component of the acetyl coenzyme A carboxylase (ACC) complex. Biotin carboxylase (BC) catalyzes the carboxylation of biotin on its carrier protein (BCCP) and then the CO(2) group is transferred by the transcarboxylase to acetyl-CoA to form malonyl-CoA. This is Acetyl-coenzyme A carboxylase carboxyl transferase subunit beta from Psychrobacter sp. (strain PRwf-1).